A 366-amino-acid polypeptide reads, in one-letter code: G kinase-anchoring protein 1 (366 aa).

The interaction with IRS1 stretch occupies residues 1–95; sequence MASAVLSSVP…SHAVCNAQHD (95 aa). Disordered regions lie at residues 20–110 and 147–177; these read QVDS…REEN and EYEDAENTSTQSKVMNKKDKRKNHQGKDRPL. 3 positions are modified to phosphoserine: serine 23, serine 25, and serine 27. The segment covering 39–50 has biased composition (polar residues); sequence TGKSQTLGSKST. Residues 47 to 77 adopt a coiled-coil conformation; the sequence is SKSTTNEKKREKRRKKKEQQQSEANELRNLA. Serine 106 bears the Phosphoserine; by PKG mark. Coiled-coil stretches lie at residues 128 to 160 and 243 to 353; these read ADLEKALLLSKLEYEEHKKEYEDAENTSTQSKV and EHNQ…YQGG.

The protein belongs to the GKAP1 family. Interacts with PRKG1 and IRS1.

It localises to the golgi apparatus. Its function is as follows. Regulates insulin-dependent IRS1 tyrosine phosphorylation in adipocytes by modulating the availability of IRS1 to IR tyrosine kinase. Its association with IRS1 is required for insulin-induced translocation of SLC2A4 to the cell membrane. Involved in TNF-induced impairment of insulin-dependent IRS1 tyrosine phosphorylation. This is G kinase-anchoring protein 1 (GKAP1) from Homo sapiens (Human).